We begin with the raw amino-acid sequence, 249 residues long: Proteasome subunit alpha type-7-1A (249 aa).

It belongs to the peptidase T1A family. The 26S proteasome consists of a 20S proteasome core and two 19S regulatory subunits. The 20S proteasome core is composed of 28 subunits that are arranged in four stacked rings, resulting in a barrel-shaped structure. The two end rings are each formed by seven alpha subunits, and the two central rings are each formed by seven beta subunits. The catalytic chamber with the active sites is on the inside of the barrel. As to expression, testis specific.

The protein localises to the cytoplasm. The protein resides in the nucleus. The proteasome is a multicatalytic proteinase complex which is characterized by its ability to cleave peptides with Arg, Phe, Tyr, Leu, and Glu adjacent to the leaving group at neutral or slightly basic pH. The proteasome has an ATP-dependent proteolytic activity. This chain is Proteasome subunit alpha type-7-1A (Prosalpha4T1), found in Drosophila melanogaster (Fruit fly).